The primary structure comprises 338 residues: Anthocyanidin reductase ((2S)-flavan-3-ol-forming) (338 aa).

NADP(+)-binding positions include 18 to 21 (TGFV), K48, 87 to 90 (VATP), and Y168.

The protein belongs to the NAD(P)-dependent epimerase/dehydratase family. Dihydroflavonol-4-reductase subfamily. Expressed in leaves and grape berries.

The catalysed reaction is a (2S,3R)-flavan-3-ol + 2 NADP(+) = an anthocyanidin with a 3-hydroxy group + 2 NADPH + 2 H(+). It catalyses the reaction a (2S,3S)-flavan-3-ol + 2 NADP(+) = an anthocyanidin with a 3-hydroxy group + 2 NADPH + 2 H(+). The protein operates within secondary metabolite biosynthesis; flavonoid biosynthesis. Produces the terminal flavan-3-ol monomers required for the formation of proanthocyanidins or condensed tannins in leaves and flowers, as well as in the skin and seeds of developing berries. Behaves as a reductase and as a C-3 epimerase. Catalyzes the double reduction of anthocyanidins, producing a mixture of (2S,3S)- and (2S,3R)-flavan-3-ols. The enzyme catalyzes sequential hydride transfers to C-2 and C-4, respectively and epimerization at C-3 is achieved by tautomerization that occurs between the two hydride transfers. Converts cyanidin, pelargonidin and delphinidin into catechin and epicatechin, afzelechin and epiafzelechin, and gallocatechin and epigallocatechin respectively. The polypeptide is Anthocyanidin reductase ((2S)-flavan-3-ol-forming) (Vitis vinifera (Grape)).